A 1007-amino-acid polypeptide reads, in one-letter code: Mediator of RNA polymerase II transcription subunit 5 (1007 aa).

The protein belongs to the Mediator complex subunit 5 family. Component of the Mediator complex.

The protein resides in the nucleus. In terms of biological role, component of the Mediator complex, a coactivator involved in the regulated transcription of nearly all RNA polymerase II-dependent genes. Mediator functions as a bridge to convey information from gene-specific regulatory proteins to the basal RNA polymerase II transcription machinery. Mediator is recruited to promoters by direct interactions with regulatory proteins and serves as a scaffold for the assembly of a functional preinitiation complex with RNA polymerase II and the general transcription factors. The chain is Mediator of RNA polymerase II transcription subunit 5 (nut1) from Aspergillus fumigatus (strain ATCC MYA-4609 / CBS 101355 / FGSC A1100 / Af293) (Neosartorya fumigata).